An 876-amino-acid chain; its full sequence is DNA double-strand break repair Rad50 ATPase (876 aa).

ATP is bound by residues R11, 31 to 37 (NGAGKTT), and Q139. Coiled-coil stretches lie at residues 188–528 (RERV…EDRL) and 575–710 (SGVE…RKER). Positions 387–484 (EETLQSEYEE…RLESVRRELE (98 aa)) constitute a Zinc-hook domain. C432 and C435 together coordinate Zn(2+).

The protein belongs to the SMC family. RAD50 subfamily. As to quaternary structure, homodimer. Forms a heterotetramer composed of two Mre11 subunits and two Rad50 subunits. Zn(2+) is required as a cofactor.

Part of the Rad50/Mre11 complex, which is involved in the early steps of DNA double-strand break (DSB) repair. The complex may facilitate opening of the processed DNA ends to aid in the recruitment of HerA and NurA. Rad50 controls the balance between DNA end bridging and DNA resection via ATP-dependent structural rearrangements of the Rad50/Mre11 complex. This Methanopyrus kandleri (strain AV19 / DSM 6324 / JCM 9639 / NBRC 100938) protein is DNA double-strand break repair Rad50 ATPase.